We begin with the raw amino-acid sequence, 430 residues long: DD-carboxypeptidase/endopeptidase Mpg (430 aa).

Zn(2+)-binding residues include His295, Asp299, and His375.

This sequence belongs to the peptidase M23B family. As to quaternary structure, monomer. The cofactor is Zn(2+). In terms of processing, likely to be synthesized as a proenzyme. The cleavage of the N-terminal domain is probably required for the activation of the enzyme.

The protein resides in the cell outer membrane. Its function is as follows. Has both endopeptidase and DD-carboxypeptidase activities. Degrades cell wall peptidoglycan (PG) to allow consummate expression of pili. The polypeptide is DD-carboxypeptidase/endopeptidase Mpg (Neisseria meningitidis serogroup B (strain ATCC BAA-335 / MC58)).